We begin with the raw amino-acid sequence, 351 residues long: Photosystem II D2 protein (351 aa).

The chain crosses the membrane as a helical span at residues 39-59 (TAYLAAGGWMTGTTFVTSWYT). His116 is a binding site for chlorophyll a. A helical transmembrane segment spans residues 123–139 (GFCLRQFEIARLVGIRP). Positions 128 and 141 each coordinate pheophytin a. A helical membrane pass occupies residues 151–164 (VFVSVFLLYPLGQA). Position 196 (His196) interacts with chlorophyll a. Residues 206-226 (GALLCAIHGATVENTLFEDGD) form a helical membrane-spanning segment. A plastoquinone contacts are provided by His213 and Phe260. His213 contacts Fe cation. Residue His267 participates in Fe cation binding. Residues 277-293 (GLWTSAIGIVGLALNLR) traverse the membrane as a helical segment.

This sequence belongs to the reaction center PufL/M/PsbA/D family. PSII is composed of 1 copy each of membrane proteins PsbA, PsbB, PsbC, PsbD, PsbE, PsbF, PsbH, PsbI, PsbJ, PsbK, PsbL, PsbM, PsbT, PsbX, PsbY, PsbZ, Psb30/Ycf12, at least 3 peripheral proteins of the oxygen-evolving complex and a large number of cofactors. It forms dimeric complexes. It depends on The D1/D2 heterodimer binds P680, chlorophylls that are the primary electron donor of PSII, and subsequent electron acceptors. It shares a non-heme iron and each subunit binds pheophytin, quinone, additional chlorophylls, carotenoids and lipids. There is also a Cl(-1) ion associated with D1 and D2, which is required for oxygen evolution. The PSII complex binds additional chlorophylls, carotenoids and specific lipids. as a cofactor.

The protein localises to the plastid. It is found in the chloroplast thylakoid membrane. It catalyses the reaction 2 a plastoquinone + 4 hnu + 2 H2O = 2 a plastoquinol + O2. Functionally, photosystem II (PSII) is a light-driven water:plastoquinone oxidoreductase that uses light energy to abstract electrons from H(2)O, generating O(2) and a proton gradient subsequently used for ATP formation. It consists of a core antenna complex that captures photons, and an electron transfer chain that converts photonic excitation into a charge separation. The D1/D2 (PsbA/PsbD) reaction center heterodimer binds P680, the primary electron donor of PSII as well as several subsequent electron acceptors. D2 is needed for assembly of a stable PSII complex. This Trieres chinensis (Marine centric diatom) protein is Photosystem II D2 protein.